Consider the following 264-residue polypeptide: Proteasome subunit beta type-4 (264 aa).

An N-acetylmethionine modification is found at methionine 1. A propeptide spanning residues 1-45 (MEAFWESRAGHWAGGPAPGQFYRIPATPSGLMDPASAPCEGPITR) is cleaved from the precursor. Tyrosine 102 is subject to Phosphotyrosine.

The protein belongs to the peptidase T1B family. In terms of assembly, the 26S proteasome consists of a 20S proteasome core and two 19S regulatory subunits. The 20S proteasome core is a barrel-shaped complex made of 28 subunits that are arranged in four stacked rings. The two outer rings are each formed by seven alpha subunits, and the two inner rings are formed by seven beta subunits. The proteolytic activity is exerted by three beta-subunits PSMB5, PSMB6 and PSMB7. Forms a ternary complex with SMAD1 and OAZ1 before PSMB4 is incorporated into the 20S proteasome. Interacts with PRPF19. As to expression, detected in liver (at protein level).

It is found in the cytoplasm. The protein resides in the nucleus. In terms of biological role, non-catalytic component of the 20S core proteasome complex involved in the proteolytic degradation of most intracellular proteins. This complex plays numerous essential roles within the cell by associating with different regulatory particles. Associated with two 19S regulatory particles, forms the 26S proteasome and thus participates in the ATP-dependent degradation of ubiquitinated proteins. The 26S proteasome plays a key role in the maintenance of protein homeostasis by removing misfolded or damaged proteins that could impair cellular functions, and by removing proteins whose functions are no longer required. Associated with the PA200 or PA28, the 20S proteasome mediates ubiquitin-independent protein degradation. This type of proteolysis is required in several pathways including spermatogenesis (20S-PA200 complex) or generation of a subset of MHC class I-presented antigenic peptides (20S-PA28 complex). SMAD1/OAZ1/PSMB4 complex mediates the degradation of the CREBBP/EP300 repressor SNIP1. In Mus musculus (Mouse), this protein is Proteasome subunit beta type-4 (Psmb4).